The chain runs to 247 residues: MLLLQALLFLLILPSHAEDDVTTTEELAPALVPPPKGTCAGWMAGIPGHPGHNGTPGRDGRDGTPGEKGEKGDAGLLGPKGETGDVGMTGAEGPRGFPGTPGRKGEPGEAAYVYRSAFSVGLETRVTVPNVPIRFTKIFYNQQNHYDGSTGKFYCNIPGLYYFSYHITVYMKDVKVSLFKKDKAVLFTYDQYQEKNVDQASGSVLLHLEVGDQVWLQVYGDGDHNGLYADNVNDSTFTGFLLYHDTN.

Residues 1–17 form the signal peptide; the sequence is MLLLQALLFLLILPSHA. 2 O-linked (GalNAc...) threonine glycosylation sites follow: T23 and T24. A 5-hydroxylysine modification is found at K36. At C39 the chain carries S-(2-succinyl)cysteine. Positions 44 to 105 are disordered; that stretch reads AGIPGHPGHN…GFPGTPGRKG (62 aa). The region spanning 45–110 is the Collagen-like domain; that stretch reads GIPGHPGHNG…PGRKGEPGEA (66 aa). 4-hydroxyproline occurs at positions 47, 50, and 56. Residues 58–73 are compositionally biased toward basic and acidic residues; it reads RDGRDGTPGEKGEKGD. 5-hydroxylysine; alternate is present on residues K68, K71, and K80. K68, K71, and K80 each carry an O-linked (Gal...) hydroxylysine; alternate glycan. P94 carries the 4-hydroxyproline modification. Position 104 is a 5-hydroxylysine; alternate (K104). Residue K104 is glycosylated (O-linked (Gal...) hydroxylysine; alternate). In terms of domain architecture, C1q spans 111 to 247; that stretch reads AYVYRSAFSV…TGFLLYHDTN (137 aa).

As to quaternary structure, homomultimer. Forms trimers, hexamers and 12- to 18-mers. The trimers (low molecular weight complexes / LMW) are assembled via non-covalent interactions of the collagen-like domains in a triple helix and hydrophobic interactions within the globular C1q domain. Several trimers can associate to form disulfide-linked hexamers (middle molecular weight complexes / MMW) and larger complexes (higher molecular weight / HMW). The HMW-complex assembly is also modulated by the degree of lysine hydroxylation and glycosylation. LMW, MMW and HMW complexes bind to HBEGF, MMW and HMW complexes bind to PDGFB, and HMW complex binds to FGF2. Interacts with CTRP9 via the C1q domain (heterotrimeric complex). Post-translationally, HMW complexes are more extensively glycosylated than smaller oligomers. Hydroxylation and glycosylation of the lysine residues within the collagen-like domain of adiponectin seem to be critically involved in regulating the formation and/or secretion of HMW complexes and consequently contribute to the insulin-sensitizing activity of adiponectin in hepatocytes. In terms of processing, O-glycosylated. Not N-glycosylated O-linked glycans on hydroxylysine residues consist of Glc-Gal disaccharides bound to the oxygen atom of post-translationally added hydroxyl groups. O-linked glycosylation in the N-terminal is disialylated with the structure Neu5Acalpha2-&gt;8Neu5Acalpha2-&gt;3Gal. Sialylated by alpha 2,8-sialyltransferase III. Succination of Cys-39 by the Krebs cycle intermediate fumarate, which leads to S-(2-succinyl)cysteine residues, inhibits polymerization and secretion of adiponectin. Adiponectin is a major target for succination in both adipocytes and adipose tissue of diabetic mice. It was proposed that succination of proteins is a biomarker of mitochondrial stress and accumulation of Krebs cycle intermediates in adipose tissue in diabetes and that succination of adiponectin may contribute to the decrease in plasma adiponectin in diabetes. As to expression, synthesized exclusively by adipocytes and secreted into plasma.

It localises to the secreted. Polymerization and secretion of adiponectin is inhibited by succination of cysteine residues by the Krebs cycle intermediate fumarate, which leads to S-(2-succinyl)cysteine residues. Its function is as follows. Important adipokine involved in the control of fat metabolism and insulin sensitivity, with direct anti-diabetic, anti-atherogenic and anti-inflammatory activities. Stimulates AMPK phosphorylation and activation in the liver and the skeletal muscle, enhancing glucose utilization and fatty-acid combustion. Antagonizes TNF-alpha by negatively regulating its expression in various tissues such as liver and macrophages, and also by counteracting its effects. Inhibits endothelial NF-kappa-B signaling through a cAMP-dependent pathway. May play a role in cell growth, angiogenesis and tissue remodeling by binding and sequestering various growth factors with distinct binding affinities, depending on the type of complex, LMW, MMW or HMW. The protein is Adiponectin (Adipoq) of Mus musculus (Mouse).